Here is a 64-residue protein sequence, read N- to C-terminus: Small ribosomal subunit protein eS17 (64 aa).

It belongs to the eukaryotic ribosomal protein eS17 family.

The sequence is that of Small ribosomal subunit protein eS17 from Methanocorpusculum labreanum (strain ATCC 43576 / DSM 4855 / Z).